Reading from the N-terminus, the 639-residue chain is MAU2 chromatid cohesion factor homolog (639 aa).

TPR repeat units lie at residues 453–486 (GGFY…ANAE) and 493–526 (SCSL…ASKI).

Belongs to the SCC4/mau-2 family. As to quaternary structure, interacts with Nipped-B to form the cohesin loading complex.

It localises to the nucleus. The protein localises to the nucleoplasm. In terms of biological role, required for association of the cohesin complex with chromatin during interphase. Plays a role in sister chromatid cohesion and normal progression through prometaphase. The chain is MAU2 chromatid cohesion factor homolog from Drosophila ananassae (Fruit fly).